The sequence spans 158 residues: Interleukin-36 alpha (158 aa).

Residues 1–5 constitute a propeptide that is removed on maturation; it reads MEKAL. A 3'-nitrotyrosine modification is found at Tyr96.

It belongs to the IL-1 family. In terms of assembly, interacts with TMED10; the interaction mediates the translocation from the cytoplasm into the ERGIC (endoplasmic reticulum-Golgi intermediate compartment) and thereby secretion. N-terminal truncation leads to a dramatic enhancement of its activity (&gt;1000-fold). As to expression, expressed in immune system and fetal brain, but not in other tissues tested or in multiple hematopoietic cell lines. Predominantly expressed in skin keratinocytes but not in fibroblasts, endothelial cells or melanocytes. Increased in lesional psoriasis skin.

It localises to the cytoplasm. The protein localises to the secreted. Cytokine that binds to and signals through the IL1RL2/IL-36R receptor which in turn activates NF-kappa-B and MAPK signaling pathways in target cells linked to a pro-inflammatory response. Part of the IL-36 signaling system that is thought to be present in epithelial barriers and to take part in local inflammatory response; similar to the IL-1 system with which it shares the coreceptor IL1RAP. Seems to be involved in skin inflammatory response by acting on keratinocytes, dendritic cells and indirectly on T-cells to drive tissue infiltration, cell maturation and cell proliferation. In cultured keratinocytes induces the expression of macrophage, T-cell, and neutrophil chemokines, such as CCL3, CCL4, CCL5, CCL2, CCL17, CCL22, CL20, CCL5, CCL2, CCL17, CCL22, CXCL8, CCL20 and CXCL1, and the production of pro-inflammatory cytokines such as TNF-alpha, IL-8 and IL-6. In cultured monocytes up-regulates expression of IL-1A, IL-1B and IL-6. In myeloid dendritic cells involved in cell maturation by up-regulating surface expression of CD83, CD86 and HLA-DR. In monocyte-derived dendritic cells facilitates dendritic cell maturation and drives T-cell proliferation. May play a role in pro-inflammatory effects in the lung. In Homo sapiens (Human), this protein is Interleukin-36 alpha.